The following is a 612-amino-acid chain: UvrABC system protein C (612 aa).

The GIY-YIG domain occupies 20–98; it reads THSGVYRMLD…IKQHRPKYNI (79 aa). In terms of domain architecture, UVR spans 208–243; sequence SSVLEEISAKMYQASEDMEYEKAQVYRDQLVVLRKL.

This sequence belongs to the UvrC family. In terms of assembly, interacts with UvrB in an incision complex.

The protein resides in the cytoplasm. Functionally, the UvrABC repair system catalyzes the recognition and processing of DNA lesions. UvrC both incises the 5' and 3' sides of the lesion. The N-terminal half is responsible for the 3' incision and the C-terminal half is responsible for the 5' incision. The chain is UvrABC system protein C from Francisella tularensis subsp. tularensis (strain WY96-3418).